We begin with the raw amino-acid sequence, 415 residues long: Multidrug resistance protein MdtA (415 aa).

The signal sequence occupies residues 1-21 (MKGSYKSRWVIVIVVVIAAIA). A compositionally biased stretch (polar residues) spans 34 to 47 (SAAPGATKQAQQSP). 2 disordered regions span residues 34–60 (SAAPGATKQAQQSPAGGRRGMRSGPLA) and 392–415 (EAQSATTPEEKATSREYAKKGARS). The segment covering 399–415 (PEEKATSREYAKKGARS) has biased composition (basic and acidic residues).

The protein belongs to the membrane fusion protein (MFP) (TC 8.A.1) family. As to quaternary structure, part of a tripartite efflux system composed of MdtA, MdtB and MdtC.

The protein resides in the cell inner membrane. The MdtABC tripartite complex confers resistance against novobiocin and deoxycholate. The chain is Multidrug resistance protein MdtA from Escherichia fergusonii (strain ATCC 35469 / DSM 13698 / CCUG 18766 / IAM 14443 / JCM 21226 / LMG 7866 / NBRC 102419 / NCTC 12128 / CDC 0568-73).